We begin with the raw amino-acid sequence, 156 residues long: Small ribosomal subunit protein uS10m (156 aa).

The protein belongs to the universal ribosomal protein uS10 family.

The protein resides in the mitochondrion. Its function is as follows. Ribosomal protein required for normal mitochondrial function and normal larval development. Thought to have a role in insulin/IGF signaling. This chain is Small ribosomal subunit protein uS10m (mrps-10), found in Caenorhabditis elegans.